Reading from the N-terminus, the 184-residue chain is Sec-independent protein translocase protein TatB (184 aa).

A helical transmembrane segment spans residues 1–21 (MFDIGFSELVLLFVVGLIVLG). The segment covering 149-168 (AEEGEPMLEMGESDFSEDEQ) has biased composition (acidic residues). The tract at residues 149–184 (AEEGEPMLEMGESDFSEDEQATASSNETIENIKEKV) is disordered.

Belongs to the TatB family. The Tat system comprises two distinct complexes: a TatABC complex, containing multiple copies of TatA, TatB and TatC subunits, and a separate TatA complex, containing only TatA subunits. Substrates initially bind to the TatABC complex, which probably triggers association of the separate TatA complex to form the active translocon.

Its subcellular location is the cell inner membrane. Its function is as follows. Part of the twin-arginine translocation (Tat) system that transports large folded proteins containing a characteristic twin-arginine motif in their signal peptide across membranes. Together with TatC, TatB is part of a receptor directly interacting with Tat signal peptides. TatB may form an oligomeric binding site that transiently accommodates folded Tat precursor proteins before their translocation. The sequence is that of Sec-independent protein translocase protein TatB from Histophilus somni (strain 129Pt) (Haemophilus somnus).